Here is a 70-residue protein sequence, read N- to C-terminus: Small ribosomal subunit protein bS21 (70 aa).

Belongs to the bacterial ribosomal protein bS21 family.

The polypeptide is Small ribosomal subunit protein bS21 (Helicobacter hepaticus (strain ATCC 51449 / 3B1)).